The chain runs to 201 residues: Putative 3-methyladenine DNA glycosylase (201 aa).

It belongs to the DNA glycosylase MPG family.

In Nitrosococcus oceani (strain ATCC 19707 / BCRC 17464 / JCM 30415 / NCIMB 11848 / C-107), this protein is Putative 3-methyladenine DNA glycosylase.